A 78-amino-acid chain; its full sequence is Alpha-amylase inhibitor Haim-1 (78 aa).

Disulfide bonds link cysteine 11–cysteine 27 and cysteine 45–cysteine 72.

Functionally, inhibits mammalian alpha-amylases specifically but has no action on plant and microbial alpha-amylases. The polypeptide is Alpha-amylase inhibitor Haim-1 (Streptomyces griseosporeus).